The following is a 205-amino-acid chain: Spermatogenesis-associated protein 24 (205 aa).

A coiled-coil region spans residues 17–167 (LAFDQLRDVI…QKQNFRNHIS (151 aa)). The required for interaction with CBX5 and TBPL1 stretch occupies residues 138-185 (EDILNGKENEIKELQQVISQQKQNFRNHISDFRIQKQQETYMAQVLDQ). The interval 185–205 (QKRKKATGMRRARSRQCSREK) is disordered. A compositionally biased stretch (basic residues) spans 186-205 (KRKKATGMRRARSRQCSREK).

It belongs to the SPATA24 family. In terms of assembly, homodimer. Interacts with CBX3, CBX5, GMNN, GTF2B, TBPL1 and the polycomb proteins PHCF2, RNF2 and SCMH1 but not with CBX1 or PCGF2. Testis-specific (at protein level).

It is found in the cytoplasm. The protein localises to the nucleus. Its subcellular location is the nucleolus. The protein resides in the nucleoplasm. Binds DNA with high affinity but does not bind to TATA boxes. Synergises with GMNN and TBP in activation of TATA box-containing promoters and with GMNN and TBPL1 in activation of the NF1 TATA-less promoter. May play a role in cytoplasm movement and removal during spermiogenesis. The polypeptide is Spermatogenesis-associated protein 24 (Spata24) (Mus musculus (Mouse)).